Here is a 100-residue protein sequence, read N- to C-terminus: Phosphoribosyl-ATP pyrophosphatase (100 aa).

The protein belongs to the PRA-PH family.

It localises to the cytoplasm. It carries out the reaction 1-(5-phospho-beta-D-ribosyl)-ATP + H2O = 1-(5-phospho-beta-D-ribosyl)-5'-AMP + diphosphate + H(+). The protein operates within amino-acid biosynthesis; L-histidine biosynthesis; L-histidine from 5-phospho-alpha-D-ribose 1-diphosphate: step 2/9. This is Phosphoribosyl-ATP pyrophosphatase (hisE) from Methanopyrus kandleri (strain AV19 / DSM 6324 / JCM 9639 / NBRC 100938).